A 252-amino-acid chain; its full sequence is Geranylgeranylglyceryl phosphate synthase (252 aa).

Mg(2+)-binding residues include aspartate 26 and serine 55. Residues 174-180, 205-206, and 227-228 contribute to the sn-glycerol 1-phosphate site; these read YLEAGSG, GG, and GT.

Belongs to the GGGP/HepGP synthase family. Group II subfamily. In terms of assembly, homotetramer. Homohexamer. The cofactor is Mg(2+).

The protein localises to the cytoplasm. It carries out the reaction sn-glycerol 1-phosphate + (2E,6E,10E)-geranylgeranyl diphosphate = sn-3-O-(geranylgeranyl)glycerol 1-phosphate + diphosphate. It functions in the pathway membrane lipid metabolism; glycerophospholipid metabolism. Prenyltransferase that catalyzes the transfer of the geranylgeranyl moiety of geranylgeranyl diphosphate (GGPP) to the C3 hydroxyl of sn-glycerol-1-phosphate (G1P). This reaction is the first ether-bond-formation step in the biosynthesis of archaeal membrane lipids. This is Geranylgeranylglyceryl phosphate synthase from Thermococcus kodakarensis (strain ATCC BAA-918 / JCM 12380 / KOD1) (Pyrococcus kodakaraensis (strain KOD1)).